Consider the following 120-residue polypeptide: UPF0231 protein YacL (120 aa).

This sequence belongs to the UPF0231 family.

In Salmonella typhi, this protein is UPF0231 protein YacL.